Reading from the N-terminus, the 1218-residue chain is Probable cation-transporting ATPase 13A5 (1218 aa).

Helical transmembrane passes span 33-53 (KAFCLVASVLTCGGLLLVFYW), 222-242 (GYIEYSVAIIILTVISIVLSV), 401-421 (FIVFLACLGVMGFFYALGVYM), and 433-453 (MALILLTVTVPPVLPAALTIG). Asp486 acts as the 4-aspartylphosphate intermediate in catalysis. Residues Asn540, Asn669, and Asn819 are each glycosylated (N-linked (GlcNAc...) asparagine). Asp850 and Asp854 together coordinate Mg(2+). The next 6 membrane-spanning stretches (helical) occupy residues 903 to 923 (FGVFKYLTMYGIIQFISALLL), 940 to 956 (VAITLMVCLTMSSTHAY), 973 to 993 (LLLSIFLNSCFSCIVQISAFL), 1042 to 1062 (FETTTLWPITTINYITVAFIF), 1077 to 1097 (IFSFLLLAALGLTIFILFSDF), and 1115 to 1135 (VLILVVALTQFCVAFFVEDSI).

This sequence belongs to the cation transport ATPase (P-type) (TC 3.A.3) family. Type V subfamily.

Its subcellular location is the membrane. It catalyses the reaction ATP + H2O = ADP + phosphate + H(+). The chain is Probable cation-transporting ATPase 13A5 (ATP13A5) from Homo sapiens (Human).